Reading from the N-terminus, the 291-residue chain is GTPase Era (291 aa).

Positions 2-167 (KSGFVSIIGR…LDEIVKYLDE (166 aa)) constitute an Era-type G domain. The segment at 10–17 (GRTNAGKS) is G1. 10–17 (GRTNAGKS) provides a ligand contact to GTP. Residues 36–40 (NATRR) form a G2 region. The G3 stretch occupies residues 57 to 60 (DTPG). Residues 57–61 (DTPGL) and 116–119 (NKVD) each bind GTP. Residues 116–119 (NKVD) are G4. The interval 146–148 (YSS) is G5. Positions 186 to 274 (YRDFILESIY…LLKLFVTVKK (89 aa)) constitute a KH type-2 domain.

It belongs to the TRAFAC class TrmE-Era-EngA-EngB-Septin-like GTPase superfamily. Era GTPase family. Monomer.

The protein resides in the cytoplasm. It is found in the cell inner membrane. In terms of biological role, an essential GTPase that binds both GDP and GTP, with rapid nucleotide exchange. Plays a role in 16S rRNA processing and 30S ribosomal subunit biogenesis and possibly also in cell cycle regulation and energy metabolism. The sequence is that of GTPase Era from Campylobacter jejuni subsp. jejuni serotype O:23/36 (strain 81-176).